Reading from the N-terminus, the 116-residue chain is MRIKRGFKARHRRKKILKLAKGFRGGHSKLFKTAKNTVDKALGYAYRDRKQRKRDFRRLWIARINAAVRMHSLSYSRFMHGLKKAGVELDRKVLAELAISDPSGFSKVVAVAAEQQ.

It belongs to the bacterial ribosomal protein bL20 family.

Its function is as follows. Binds directly to 23S ribosomal RNA and is necessary for the in vitro assembly process of the 50S ribosomal subunit. It is not involved in the protein synthesizing functions of that subunit. This chain is Large ribosomal subunit protein bL20, found in Desulfosudis oleivorans (strain DSM 6200 / JCM 39069 / Hxd3) (Desulfococcus oleovorans).